A 154-amino-acid polypeptide reads, in one-letter code: uncharacterized protein (154 aa).

12–19 (GSSDVGKT) contributes to the GTP binding site. Residues 17 to 112 (GKTTLMENLI…KIPYGIFINK (96 aa)) enclose the G domain.

To M.thermoautotrophicum MTH765.

This is an uncharacterized protein from Methanocaldococcus jannaschii (strain ATCC 43067 / DSM 2661 / JAL-1 / JCM 10045 / NBRC 100440) (Methanococcus jannaschii).